The chain runs to 80 residues: Conotoxin VnMSGL-0123 (80 aa).

Positions 1-20 (MSGLGIMVLTLLLLVSMATS) are cleaved as a signal peptide. The propeptide occupies 21-44 (HQDGGGKQATQRDAINVRRRRSIT). Intrachain disulfides connect cysteine 53-cysteine 65, cysteine 57-cysteine 74, and cysteine 64-cysteine 78. At phenylalanine 79 the chain carries Phenylalanine amide.

This sequence belongs to the conotoxin O3 superfamily. In terms of tissue distribution, expressed by the venom duct.

Its subcellular location is the secreted. This is Conotoxin VnMSGL-0123 from Conus ventricosus (Mediterranean cone).